A 242-amino-acid polypeptide reads, in one-letter code: Demethylmenaquinone methyltransferase (242 aa).

S-adenosyl-L-methionine is bound by residues T62, D83, and 112–113; that span reads DV.

Belongs to the class I-like SAM-binding methyltransferase superfamily. MenG/UbiE family.

It catalyses the reaction a 2-demethylmenaquinol + S-adenosyl-L-methionine = a menaquinol + S-adenosyl-L-homocysteine + H(+). The protein operates within quinol/quinone metabolism; menaquinone biosynthesis; menaquinol from 1,4-dihydroxy-2-naphthoate: step 2/2. In terms of biological role, methyltransferase required for the conversion of demethylmenaquinol (DMKH2) to menaquinol (MKH2). This chain is Demethylmenaquinone methyltransferase, found in Protochlamydia amoebophila (strain UWE25).